The sequence spans 467 residues: ATP-dependent protease ATPase subunit HslU (467 aa).

Residues Val-20, 62-67, Asp-280, Glu-345, and Arg-417 contribute to the ATP site; that span reads GVGKTE.

This sequence belongs to the ClpX chaperone family. HslU subfamily. In terms of assembly, a double ring-shaped homohexamer of HslV is capped on each side by a ring-shaped HslU homohexamer. The assembly of the HslU/HslV complex is dependent on binding of ATP.

The protein resides in the cytoplasm. ATPase subunit of a proteasome-like degradation complex; this subunit has chaperone activity. The binding of ATP and its subsequent hydrolysis by HslU are essential for unfolding of protein substrates subsequently hydrolyzed by HslV. HslU recognizes the N-terminal part of its protein substrates and unfolds these before they are guided to HslV for hydrolysis. The polypeptide is ATP-dependent protease ATPase subunit HslU (Enterococcus faecalis (strain ATCC 700802 / V583)).